Consider the following 581-residue polypeptide: 2-succinyl-5-enolpyruvyl-6-hydroxy-3-cyclohexene-1-carboxylate synthase (581 aa).

This sequence belongs to the TPP enzyme family. MenD subfamily. As to quaternary structure, homodimer. The cofactor is Mg(2+). Mn(2+) serves as cofactor. It depends on thiamine diphosphate as a cofactor.

The catalysed reaction is isochorismate + 2-oxoglutarate + H(+) = 5-enolpyruvoyl-6-hydroxy-2-succinyl-cyclohex-3-ene-1-carboxylate + CO2. It participates in quinol/quinone metabolism; 1,4-dihydroxy-2-naphthoate biosynthesis; 1,4-dihydroxy-2-naphthoate from chorismate: step 2/7. It functions in the pathway quinol/quinone metabolism; menaquinone biosynthesis. Functionally, catalyzes the thiamine diphosphate-dependent decarboxylation of 2-oxoglutarate and the subsequent addition of the resulting succinic semialdehyde-thiamine pyrophosphate anion to isochorismate to yield 2-succinyl-5-enolpyruvyl-6-hydroxy-3-cyclohexene-1-carboxylate (SEPHCHC). In Psychromonas ingrahamii (strain DSM 17664 / CCUG 51855 / 37), this protein is 2-succinyl-5-enolpyruvyl-6-hydroxy-3-cyclohexene-1-carboxylate synthase.